The chain runs to 600 residues: Adenine deaminase 3 (600 aa).

It belongs to the metallo-dependent hydrolases superfamily. Adenine deaminase family. It depends on Mn(2+) as a cofactor.

It carries out the reaction adenine + H2O + H(+) = hypoxanthine + NH4(+). This chain is Adenine deaminase 3, found in Rhizobium johnstonii (strain DSM 114642 / LMG 32736 / 3841) (Rhizobium leguminosarum bv. viciae).